Reading from the N-terminus, the 263-residue chain is Endonuclease 8 (263 aa).

Pro2 (schiff-base intermediate with DNA) is an active-site residue. Glu3 serves as the catalytic Proton donor. Residue Lys53 is the Proton donor; for beta-elimination activity of the active site. DNA is bound by residues Gln70, Arg125, and Asn169. The segment at 229-263 (KVFHRDGELCERCGGIIEKTTLSSRPFYWCPGCQH) adopts an FPG-type zinc-finger fold. Arg253 serves as the catalytic Proton donor; for delta-elimination activity.

The protein belongs to the FPG family. Zn(2+) is required as a cofactor.

The catalysed reaction is 2'-deoxyribonucleotide-(2'-deoxyribose 5'-phosphate)-2'-deoxyribonucleotide-DNA = a 3'-end 2'-deoxyribonucleotide-(2,3-dehydro-2,3-deoxyribose 5'-phosphate)-DNA + a 5'-end 5'-phospho-2'-deoxyribonucleoside-DNA + H(+). In terms of biological role, involved in base excision repair of DNA damaged by oxidation or by mutagenic agents. Acts as a DNA glycosylase that recognizes and removes damaged bases. Has a preference for oxidized pyrimidines, such as thymine glycol, 5,6-dihydrouracil and 5,6-dihydrothymine. Has AP (apurinic/apyrimidinic) lyase activity and introduces nicks in the DNA strand. Cleaves the DNA backbone by beta-delta elimination to generate a single-strand break at the site of the removed base with both 3'- and 5'-phosphates. This is Endonuclease 8 from Shigella dysenteriae serotype 1 (strain Sd197).